The chain runs to 117 residues: UPF0122 protein Dred_2057 (117 aa).

This sequence belongs to the UPF0122 family.

In terms of biological role, might take part in the signal recognition particle (SRP) pathway. This is inferred from the conservation of its genetic proximity to ftsY/ffh. May be a regulatory protein. In Desulforamulus reducens (strain ATCC BAA-1160 / DSM 100696 / MI-1) (Desulfotomaculum reducens), this protein is UPF0122 protein Dred_2057.